Consider the following 130-residue polypeptide: Small ribosomal subunit protein uS11c (130 aa).

The protein belongs to the universal ribosomal protein uS11 family. In terms of assembly, part of the 30S ribosomal subunit.

Its subcellular location is the plastid. The protein localises to the chloroplast. This chain is Small ribosomal subunit protein uS11c, found in Angiopteris evecta (Mule's foot fern).